The chain runs to 267 residues: 4-hydroxy-tetrahydrodipicolinate reductase (267 aa).

NAD(+) contacts are provided by residues Gly8 to Met13 and Asp34. Arg35 serves as a coordination point for NADP(+). Residues Gly98–Thr100 and Ala122–Phe125 contribute to the NAD(+) site. The active-site Proton donor/acceptor is His155. Residue His156 participates in (S)-2,3,4,5-tetrahydrodipicolinate binding. Lys159 functions as the Proton donor in the catalytic mechanism. (S)-2,3,4,5-tetrahydrodipicolinate is bound at residue Gly165–Thr166.

It belongs to the DapB family.

It is found in the cytoplasm. The enzyme catalyses (S)-2,3,4,5-tetrahydrodipicolinate + NAD(+) + H2O = (2S,4S)-4-hydroxy-2,3,4,5-tetrahydrodipicolinate + NADH + H(+). The catalysed reaction is (S)-2,3,4,5-tetrahydrodipicolinate + NADP(+) + H2O = (2S,4S)-4-hydroxy-2,3,4,5-tetrahydrodipicolinate + NADPH + H(+). The protein operates within amino-acid biosynthesis; L-lysine biosynthesis via DAP pathway; (S)-tetrahydrodipicolinate from L-aspartate: step 4/4. In terms of biological role, catalyzes the conversion of 4-hydroxy-tetrahydrodipicolinate (HTPA) to tetrahydrodipicolinate. This Pseudomonas entomophila (strain L48) protein is 4-hydroxy-tetrahydrodipicolinate reductase.